The primary structure comprises 916 residues: Probable dipeptidyl-aminopeptidase B (916 aa).

Disordered regions lie at residues 1–35 (MGRTGDLENAEFFPMTRRRSTSGTSSRSSTDSGLS) and 67–86 (DAEADVDEPFLPTSSKKLGS). The Cytoplasmic segment spans residues 1–92 (MGRTGDLENA…KLGSGSRTRQ (92 aa)). Low complexity predominate over residues 21–35 (TSGTSSRSSTDSGLS). Residues 93–113 (IFWALVILCLGGWVLALVLFL) traverse the membrane as a helical; Signal-anchor for type II membrane protein segment. The Vacuolar segment spans residues 114–916 (THGRASSQTA…VKRSVPAFAH (803 aa)). N-linked (GlcNAc...) asparagine glycosylation is found at asparagine 349 and asparagine 640. The Charge relay system role is filled by serine 754. N-linked (GlcNAc...) asparagine glycosylation is found at asparagine 808 and asparagine 813. Catalysis depends on charge relay system residues aspartate 831 and histidine 864.

The protein belongs to the peptidase S9B family.

Its subcellular location is the vacuole membrane. The catalysed reaction is Release of an N-terminal dipeptide, Xaa-Yaa-|-Zaa-, from a polypeptide, preferentially when Yaa is Pro, provided Zaa is neither Pro nor hydroxyproline.. Its function is as follows. Type IV dipeptidyl-peptidase which removes N-terminal dipeptides sequentially from polypeptides having unsubstituted N-termini provided that the penultimate residue is proline. This Aspergillus flavus (strain ATCC 200026 / FGSC A1120 / IAM 13836 / NRRL 3357 / JCM 12722 / SRRC 167) protein is Probable dipeptidyl-aminopeptidase B (dapB).